The chain runs to 663 residues: Oligopeptide-binding protein SarA (663 aa).

A signal peptide spans 1–22; that stretch reads MKKGKILALAGVALLATGVLAA. C23 is lipidated: N-palmitoyl cysteine. A lipid anchor (S-diacylglycerol cysteine) is attached at C23. A disordered region spans residues 637-663; that stretch reads QKAQEKWNKERAESNKKAQEELEKHVK.

Belongs to the bacterial solute-binding protein 5 family.

It is found in the cell membrane. In terms of biological role, may be involved in the expression of cell surface properties important for colonization of the human oral cavity. It may also be involved in uptake processes. This chain is Oligopeptide-binding protein SarA (sarA), found in Streptococcus gordonii (strain Challis / ATCC 35105 / BCRC 15272 / CH1 / DL1 / V288).